Reading from the N-terminus, the 167-residue chain is Protein-export protein SecB (167 aa).

The protein belongs to the SecB family. In terms of assembly, homotetramer, a dimer of dimers. One homotetramer interacts with 1 SecA dimer.

Its subcellular location is the cytoplasm. Its function is as follows. One of the proteins required for the normal export of preproteins out of the cell cytoplasm. It is a molecular chaperone that binds to a subset of precursor proteins, maintaining them in a translocation-competent state. It also specifically binds to its receptor SecA. The protein is Protein-export protein SecB of Cellvibrio japonicus (strain Ueda107) (Pseudomonas fluorescens subsp. cellulosa).